The chain runs to 154 residues: Interleukin-2 (154 aa).

Residues 1–20 (MYKIQLLSCIALTLILVTNS) form the signal peptide. The cysteines at positions 78 and 126 are disulfide-linked. An N-linked (GlcNAc...) asparagine glycan is attached at asparagine 111.

The protein belongs to the IL-2 family.

The protein localises to the secreted. Functionally, cytokine produced by activated CD4-positive helper T-cells and to a lesser extend activated CD8-positive T-cells and natural killer (NK) cells that plays pivotal roles in the immune response and tolerance. Binds to a receptor complex composed of either the high-affinity trimeric IL-2R (IL2RA/CD25, IL2RB/CD122 and IL2RG/CD132) or the low-affinity dimeric IL-2R (IL2RB and IL2RG). Interaction with the receptor leads to oligomerization and conformation changes in the IL-2R subunits resulting in downstream signaling starting with phosphorylation of JAK1 and JAK3. In turn, JAK1 and JAK3 phosphorylate the receptor to form a docking site leading to the phosphorylation of several substrates including STAT5. This process leads to activation of several pathways including STAT, phosphoinositide-3-kinase/PI3K and mitogen-activated protein kinase/MAPK pathways. Functions as a T-cell growth factor and can increase NK-cell cytolytic activity as well. Promotes strong proliferation of activated B-cells and subsequently immunoglobulin production. Plays a pivotal role in regulating the adaptive immune system by controlling the survival and proliferation of regulatory T-cells, which are required for the maintenance of immune tolerance. Moreover, participates in the differentiation and homeostasis of effector T-cell subsets, including Th1, Th2, Th17 as well as memory CD8-positive T-cells. The sequence is that of Interleukin-2 (IL2) from Felis catus (Cat).